Reading from the N-terminus, the 102-residue chain is RNA-binding protein Hfq (102 aa).

In terms of domain architecture, Sm spans 9 to 68 (DPFLNALRRERVPVSIYLVNGIKLQGQIESFDQFVILLKNTVSQMVYKHAISTVVPSRPV). A disordered region spans residues 63–102 (VPSRPVSHHSNNASGGTSSNYHHGSSAQNTSAQQDSEETE). Polar residues predominate over residues 70–96 (HHSNNASGGTSSNYHHGSSAQNTSAQQ).

This sequence belongs to the Hfq family. In terms of assembly, homohexamer.

In terms of biological role, RNA chaperone that binds small regulatory RNA (sRNAs) and mRNAs to facilitate mRNA translational regulation in response to envelope stress, environmental stress and changes in metabolite concentrations. Also binds with high specificity to tRNAs. This Shigella boydii serotype 18 (strain CDC 3083-94 / BS512) protein is RNA-binding protein Hfq.